The primary structure comprises 188 residues: ATP synthase subunit delta (188 aa).

The protein belongs to the ATPase delta chain family. As to quaternary structure, F-type ATPases have 2 components, F(1) - the catalytic core - and F(0) - the membrane proton channel. F(1) has five subunits: alpha(3), beta(3), gamma(1), delta(1), epsilon(1). F(0) has three main subunits: a(1), b(2) and c(10-14). The alpha and beta chains form an alternating ring which encloses part of the gamma chain. F(1) is attached to F(0) by a central stalk formed by the gamma and epsilon chains, while a peripheral stalk is formed by the delta and b chains.

Its subcellular location is the cell membrane. Its function is as follows. F(1)F(0) ATP synthase produces ATP from ADP in the presence of a proton or sodium gradient. F-type ATPases consist of two structural domains, F(1) containing the extramembraneous catalytic core and F(0) containing the membrane proton channel, linked together by a central stalk and a peripheral stalk. During catalysis, ATP synthesis in the catalytic domain of F(1) is coupled via a rotary mechanism of the central stalk subunits to proton translocation. In terms of biological role, this protein is part of the stalk that links CF(0) to CF(1). It either transmits conformational changes from CF(0) to CF(1) or is implicated in proton conduction. This Lawsonia intracellularis (strain PHE/MN1-00) protein is ATP synthase subunit delta.